Reading from the N-terminus, the 166-residue chain is Orofacial cleft 1 candidate gene 1 protein homolog (166 aa).

The segment at 1-22 (MDKEKFQQKAVKQTKQKKSTSA) is disordered.

The chain is Orofacial cleft 1 candidate gene 1 protein homolog (Ofcc1) from Mus musculus (Mouse).